Here is a 381-residue protein sequence, read N- to C-terminus: Fatty acid elongase 6 (381 aa).

The next 7 membrane-spanning stretches (helical) occupy residues 10–30, 69–89, 107–127, 153–173, 182–202, 216–236, and 280–300; these read IAAA…LVYS, LPYL…SLIV, GLVH…GLMI, LIWL…IMLL, FLHV…LLVA, GVHV…SGIV, and LLQI…NFLV. A HxxHH motif motif is present at residues 184–188; the sequence is HVYHH. His-187 serves as the catalytic Nucleophile. A disordered region spans residues 362–381; the sequence is RKNGNGNGQKASLQAMAGSR.

It belongs to the ELO family.

Its subcellular location is the membrane. It functions in the pathway lipid metabolism; polyunsaturated fatty acid biosynthesis. In terms of biological role, involved in the synthesis of fatty acids. Elongates C18 polyunsaturated fatty acids (PUFAs) with a preference for Delta6 PUFAs. The polypeptide is Fatty acid elongase 6 (Leishmania major).